The following is a 484-amino-acid chain: Glutamate--tRNA ligase (484 aa).

The 'HIGH' region motif lies at 11–21 (PSPTGYLHIGN). A 'KMSKS' region motif is present at residues 252–256 (KLSKR). Lys-255 lines the ATP pocket.

The protein belongs to the class-I aminoacyl-tRNA synthetase family. Glutamate--tRNA ligase type 1 subfamily. In terms of assembly, monomer.

Its subcellular location is the cytoplasm. The catalysed reaction is tRNA(Glu) + L-glutamate + ATP = L-glutamyl-tRNA(Glu) + AMP + diphosphate. Functionally, catalyzes the attachment of glutamate to tRNA(Glu) in a two-step reaction: glutamate is first activated by ATP to form Glu-AMP and then transferred to the acceptor end of tRNA(Glu). In Staphylococcus aureus (strain COL), this protein is Glutamate--tRNA ligase.